The primary structure comprises 246 residues: Aquaporin AqpM (246 aa).

At 1–11 the chain is on the cytoplasmic side; sequence MVSLTKRCIAE. A helical membrane pass occupies residues 12–32; sequence FIGTFFLVFFGAGAAAITLMI. Residues 33–45 are Extracellular-facing; it reads ASGGTAPNPFNIG. The helical transmembrane segment at 46-66 threads the bilayer; it reads IGLLGGLGDWVAIGLAFGFAI. Residues 67-69 are Cytoplasmic-facing; sequence AAS. Residues 70–90 form a helical membrane-spanning segment; sequence IYALGNISGCHINPAVTIGLW. Residues 82 to 84 carry the NPA 1 motif; it reads NPA. At 91 to 103 the chain is on the extracellular side; that stretch reads SVKKFPGRDVVPY. A helical transmembrane segment spans residues 104–124; that stretch reads IIAQLLGAAFASFIFLQCAGI. The Cytoplasmic portion of the chain corresponds to 125 to 145; the sequence is TAATIGGLGATAPFPGIGYWQ. A helical membrane pass occupies residues 146-166; sequence AMLAETVGTFLLMITIMGIAV. Residues 167–172 are Extracellular-facing; that stretch reads DERAPK. The chain crosses the membrane as a helical span at residues 173–193; the sequence is GFAGIIIGLTVAGIITTIGNI. Over 194–217 the chain is Cytoplasmic; it reads TGSSLNPARTFGPYLNDMVFAGTN. Residues 199–201 carry the NPA 2 motif; that stretch reads NPA. The chain crosses the membrane as a helical span at residues 218-238; it reads LWNYFPIYVIGPVVGAVLAAL. Topologically, residues 239-246 are extracellular; sequence TYQYLTSE.

The protein belongs to the MIP/aquaporin (TC 1.A.8) family. As to quaternary structure, homotetramer.

It localises to the cell membrane. Functionally, channel that permits osmotically driven movement of water in both directions. It mediates rapid entry or exit of water in response to abrupt changes in osmolarity. Also exhibits a transient but reproducible increase in the initial glycerol flux. The polypeptide is Aquaporin AqpM (aqpM) (Methanothermobacter thermautotrophicus (strain ATCC 29096 / DSM 1053 / JCM 10044 / NBRC 100330 / Delta H) (Methanobacterium thermoautotrophicum)).